A 414-amino-acid chain; its full sequence is Glyco-Gag protein (414 aa).

Over 1-51 (MSGASSGTAIGAHLFGVSPECRVLIGDEGAGPSKSLSEVSFSVWYQSRAAR) the chain is Cytoplasmic. Residues 52–72 (LVIFCLVASFLVPCLTFLIAE) form a helical membrane-spanning segment. Residues 73-414 (TVMGQTIATP…TNLAQVKQVV (342 aa)) lie on the Extracellular side of the membrane. An N-linked (GlcNAc...) asparagine; by host glycan is attached at Asn-134. The interval 171–282 (VRPFLPPPKP…LREGPNNRPQ (112 aa)) is disordered. Pro residues predominate over residues 174-193 (FLPPPKPPTPLPQPLSPQPS). Residues 194–206 (APLTSSLYPVLPK) are compositionally biased toward low complexity. Positions 210 to 220 (PKPPVLPPDPS) are enriched in pro residues.

Post-translationally, glycosylated by host. In terms of processing, cleaved by host near the middle of the molecule, releasing the c-terminal half containing capsid and nucleoprotein domains op GAG.

It localises to the host cell membrane. Functionally, plays a role in viral particle release. Presumably acts by facilitating the fission of the virion bud at the cell surface. The protein is Glyco-Gag protein of Felidae (cat family).